The primary structure comprises 772 residues: TSA1-like protein (772 aa).

The N-terminal stretch at 1 to 24 (MGTKFLALGLSLCLVLSSFYQVSC) is a signal peptide. Positions 49-72 (LQGNEAVDQTETSGQKNSTVSDNN) are disordered. EFE repeat repeat units follow at residues 98 to 138 (GAVT…KVEE), 139 to 176 (SKDDEEAARRHKMLEAIEREFEAAHAGFEQLKTDDSAQ), 177 to 213 (GLDDEQSAKRQSMLDEIERDFEAATKGLEQLKADDLT), 214 to 251 (GINDEEHAAKRQKMLEEIEREFEEATKGLEELRHSTSS), 252 to 292 (TDDE…VKDD), 293 to 330 (VDDKEQDAKRQSMLDAIEREFEAVTESFKQLEDIADNK), 331 to 368 (AEGDDESAKRQSMLDEIEREFEAATNSLKQLNLDDFSE), 369 to 407 (GDDSAESARRNSMLEAIEREFEAATKGLEELKANDSTGD), 408 to 439 (KDDDEHVARRKIMLEAIEREFEAATKGLEELK), and 440 to 472 (NESEQAENKRNSMLEAFEREFEAATNAKANGEN). The 10 X approximate EFE repeat stretch occupies residues 98-472 (GAVTDEVDKP…ATNAKANGEN (375 aa)). Residues 187 to 476 (QSMLDEIERD…KANGENSAKN (290 aa)) are a coiled coil. Disordered regions lie at residues 465-487 (NAKANGENSAKNPSTISTTVQKS) and 555-585 (HRKETSSKVGSVLGSSSSVTSTTSESAATSE). The span at 466-487 (AKANGENSAKNPSTISTTVQKS) shows a compositional bias: polar residues. Residues 561–585 (SKVGSVLGSSSSVTSTTSESAATSE) show a composition bias toward low complexity. Positions 688–748 (DALHIRIVAI…AVHKAKDEQA (61 aa)) form a coiled coil.

As to quaternary structure, has no interaction with PYK10 and is not part of the PYK10 complex. Interacts directly or indirectly with MEB1 and MEB2. As to expression, expressed in roots. Detected in shoot apex.

Its subcellular location is the endoplasmic reticulum lumen. Functionally, responsible for the ER body formation. Regulates the number and shape of the ER bodies and the accumulation of PYK10 in ER bodies, but is not involved in the expression of PYK10. This is TSA1-like protein (NAI2) from Arabidopsis thaliana (Mouse-ear cress).